Reading from the N-terminus, the 557-residue chain is TBCC domain-containing protein 1 (557 aa).

The region spanning 290–435 (TTKRAKIACN…LEDHMARTGL (146 aa)) is the C-CAP/cofactor C-like domain.

It belongs to the TBCC family.

It localises to the cytoplasm. The protein localises to the cytoskeleton. Its subcellular location is the microtubule organizing center. It is found in the centrosome. The protein resides in the spindle pole. Functionally, plays a role in the regulation of centrosome and Golgi apparatus positioning, with consequences on cell shape and cell migration. In Homo sapiens (Human), this protein is TBCC domain-containing protein 1 (TBCCD1).